The chain runs to 269 residues: 4-hydroxy-tetrahydrodipicolinate reductase (269 aa).

NAD(+)-binding positions include 8 to 13 (GAAGRM) and glutamate 34. Residue arginine 35 coordinates NADP(+). Residues 98–100 (GTT) and 122–125 (APNY) contribute to the NAD(+) site. Histidine 155 serves as the catalytic Proton donor/acceptor. Position 156 (histidine 156) interacts with (S)-2,3,4,5-tetrahydrodipicolinate. Lysine 159 (proton donor) is an active-site residue. 165-166 (GT) lines the (S)-2,3,4,5-tetrahydrodipicolinate pocket.

The protein belongs to the DapB family.

Its subcellular location is the cytoplasm. The catalysed reaction is (S)-2,3,4,5-tetrahydrodipicolinate + NAD(+) + H2O = (2S,4S)-4-hydroxy-2,3,4,5-tetrahydrodipicolinate + NADH + H(+). It catalyses the reaction (S)-2,3,4,5-tetrahydrodipicolinate + NADP(+) + H2O = (2S,4S)-4-hydroxy-2,3,4,5-tetrahydrodipicolinate + NADPH + H(+). It participates in amino-acid biosynthesis; L-lysine biosynthesis via DAP pathway; (S)-tetrahydrodipicolinate from L-aspartate: step 4/4. In terms of biological role, catalyzes the conversion of 4-hydroxy-tetrahydrodipicolinate (HTPA) to tetrahydrodipicolinate. This is 4-hydroxy-tetrahydrodipicolinate reductase from Vibrio cholerae serotype O1 (strain ATCC 39541 / Classical Ogawa 395 / O395).